The chain runs to 347 residues: NADH-ubiquinone oxidoreductase chain 2 (347 aa).

Transmembrane regions (helical) follow at residues 3–23 (PMTFTVLLATIMSGTSIVLLS), 25–45 (HWFMTWLGFEMNMMAIIPVLM), 59–79 (YFLTQATASMILVLAIIINTM), 96–116 (ILITLALVMKLGLAPFHFWVP), 127–147 (GLILLTWQKIAPLSLLYQIYP), 149–169 (LNTNLLLTMSLLSIMIGGWGG), 178–198 (IMAYSSIAHMGWMIAIMTYNP), 201–221 (SLLNLIIYITMTSSMFMLLII), 239–259 (IVTTMMLISLLSLGGLPPLTG), 274–294 (NSLILPTLMSILALLNLFFYM), and 326–346 (TAPLISISTMILPLTPLLITL).

The protein belongs to the complex I subunit 2 family. Core subunit of respiratory chain NADH dehydrogenase (Complex I) which is composed of 45 different subunits. Interacts with TMEM242.

The protein resides in the mitochondrion inner membrane. The catalysed reaction is a ubiquinone + NADH + 5 H(+)(in) = a ubiquinol + NAD(+) + 4 H(+)(out). Core subunit of the mitochondrial membrane respiratory chain NADH dehydrogenase (Complex I) which catalyzes electron transfer from NADH through the respiratory chain, using ubiquinone as an electron acceptor. Essential for the catalytic activity and assembly of complex I. The sequence is that of NADH-ubiquinone oxidoreductase chain 2 from Sylvisorex ollula (Greater forest shrew).